The sequence spans 314 residues: Ribosomal protein L11 methyltransferase (314 aa).

S-adenosyl-L-methionine-binding residues include T161, G182, D204, and N248.

Belongs to the methyltransferase superfamily. PrmA family.

It is found in the cytoplasm. The enzyme catalyses L-lysyl-[protein] + 3 S-adenosyl-L-methionine = N(6),N(6),N(6)-trimethyl-L-lysyl-[protein] + 3 S-adenosyl-L-homocysteine + 3 H(+). Its function is as follows. Methylates ribosomal protein L11. This chain is Ribosomal protein L11 methyltransferase, found in Listeria welshimeri serovar 6b (strain ATCC 35897 / DSM 20650 / CCUG 15529 / CIP 8149 / NCTC 11857 / SLCC 5334 / V8).